The sequence spans 613 residues: Dihydroxy-acid dehydratase (613 aa).

Position 81 (Asp81) interacts with Mg(2+). Cys122 serves as a coordination point for [2Fe-2S] cluster. Asp123 and Lys124 together coordinate Mg(2+). Lys124 is subject to N6-carboxylysine. Cys195 lines the [2Fe-2S] cluster pocket. Glu491 provides a ligand contact to Mg(2+). Ser517 functions as the Proton acceptor in the catalytic mechanism.

The protein belongs to the IlvD/Edd family. In terms of assembly, homodimer. The cofactor is [2Fe-2S] cluster. Mg(2+) is required as a cofactor.

The enzyme catalyses (2R)-2,3-dihydroxy-3-methylbutanoate = 3-methyl-2-oxobutanoate + H2O. It catalyses the reaction (2R,3R)-2,3-dihydroxy-3-methylpentanoate = (S)-3-methyl-2-oxopentanoate + H2O. It participates in amino-acid biosynthesis; L-isoleucine biosynthesis; L-isoleucine from 2-oxobutanoate: step 3/4. Its pathway is amino-acid biosynthesis; L-valine biosynthesis; L-valine from pyruvate: step 3/4. Functionally, functions in the biosynthesis of branched-chain amino acids. Catalyzes the dehydration of (2R,3R)-2,3-dihydroxy-3-methylpentanoate (2,3-dihydroxy-3-methylvalerate) into 2-oxo-3-methylpentanoate (2-oxo-3-methylvalerate) and of (2R)-2,3-dihydroxy-3-methylbutanoate (2,3-dihydroxyisovalerate) into 2-oxo-3-methylbutanoate (2-oxoisovalerate), the penultimate precursor to L-isoleucine and L-valine, respectively. This Buchnera aphidicola subsp. Schlechtendalia chinensis protein is Dihydroxy-acid dehydratase.